Here is a 601-residue protein sequence, read N- to C-terminus: Chaperone protein DnaK (601 aa).

Phosphothreonine; by autocatalysis is present on T175. The interval 570-601 is disordered; it reads FAQKAASKETSKNEQNEDGSIDAEIKEEDPKA. The span at 575–584 shows a compositional bias: basic and acidic residues; it reads ASKETSKNEQ. The span at 585-601 shows a compositional bias: acidic residues; the sequence is NEDGSIDAEIKEEDPKA.

This sequence belongs to the heat shock protein 70 family.

In terms of biological role, acts as a chaperone. The chain is Chaperone protein DnaK from Mycoplasma mobile (strain ATCC 43663 / 163K / NCTC 11711) (Mesomycoplasma mobile).